Here is a 259-residue protein sequence, read N- to C-terminus: Ribonuclease HII (259 aa).

The 189-residue stretch at Thr70 to Glu258 folds into the RNase H type-2 domain. The a divalent metal cation site is built by Asp76, Glu77, and Asp168.

This sequence belongs to the RNase HII family. It depends on Mn(2+) as a cofactor. Mg(2+) serves as cofactor.

Its subcellular location is the cytoplasm. The catalysed reaction is Endonucleolytic cleavage to 5'-phosphomonoester.. Functionally, endonuclease that specifically degrades the RNA of RNA-DNA hybrids. The polypeptide is Ribonuclease HII (Streptococcus pneumoniae serotype 4 (strain ATCC BAA-334 / TIGR4)).